The sequence spans 220 residues: 1-Cys peroxiredoxin A (220 aa).

The region spanning L4–T165 is the Thioredoxin domain. The Cysteine sulfenic acid (-SOH) intermediate role is filled by C46. Positions K195–K218 match the Bipartite nuclear localization signal motif.

The protein belongs to the peroxiredoxin family. Prx6 subfamily.

Its subcellular location is the nucleus. It localises to the cytoplasm. It catalyses the reaction a hydroperoxide + [thioredoxin]-dithiol = an alcohol + [thioredoxin]-disulfide + H2O. In terms of biological role, thiol-specific peroxidase that catalyzes the reduction of hydrogen peroxide and organic hydroperoxides to water and alcohols, respectively. Seems to contribute to the inhibition of germination during stress. This Oryza sativa subsp. japonica (Rice) protein is 1-Cys peroxiredoxin A.